The primary structure comprises 529 residues: Peptide chain release factor 3 (529 aa).

A tr-type G domain is found at N11–L280. Residues S20–T27, D88–H92, and N142–D145 contribute to the GTP site.

This sequence belongs to the TRAFAC class translation factor GTPase superfamily. Classic translation factor GTPase family. PrfC subfamily.

It is found in the cytoplasm. In terms of biological role, increases the formation of ribosomal termination complexes and stimulates activities of RF-1 and RF-2. It binds guanine nucleotides and has strong preference for UGA stop codons. It may interact directly with the ribosome. The stimulation of RF-1 and RF-2 is significantly reduced by GTP and GDP, but not by GMP. The chain is Peptide chain release factor 3 from Pseudoalteromonas translucida (strain TAC 125).